We begin with the raw amino-acid sequence, 149 residues long: Pleckstrin homology domain-containing family J member 1 (149 aa).

The 94-residue stretch at 15-108 folds into the PH domain; the sequence is PAEMAAELGM…WMEALRRASY (94 aa).

Expressed in testis and liver.

The sequence is that of Pleckstrin homology domain-containing family J member 1 (PLEKHJ1) from Homo sapiens (Human).